The sequence spans 444 residues: MSEMTPREIVHELDSHIIGQDKAKRSVAIALRNRWRRMQLAPELRTEVTPKNILMIGPTGVGKTEIARRLAKLANAPFIKVEATKFTEVGYVGKEVESIIRDLTDVAIKMTHQQAVEKVKFRAEEHAEDRILDILLPPARDAWGNNEEGNNDSGTRQSFRKKLREGKLDDKEIEVDVAAPQVGVEIMAPPGMEEMTNQLQGMFQNLSGGNTTKKRKMKIVDALKALTEEEGAKLVNPEELKEQAIFNVENHGIVFIDEIDKICKGSNSHSGDVSREGVQRDLLPLVEGSTVSTKHGMVKTDHMLFITSGAFQMAKPSDLIPELQGRLPIRVELEALTADDFKRILTEPNASLTEQYIALLATENVKVEFTEDGISRIAESAFQVNETTENIGARRLHTVMERLMEEISYDASEKNGESLIVDAEYVSSRLGELVADEDLSRFIL.

ATP contacts are provided by residues I18 and 60-65 (GVGKTE). The tract at residues 141-161 (DAWGNNEEGNNDSGTRQSFRK) is disordered. The span at 147–157 (EEGNNDSGTRQ) shows a compositional bias: polar residues. D257, E322, and R394 together coordinate ATP.

Belongs to the ClpX chaperone family. HslU subfamily. In terms of assembly, a double ring-shaped homohexamer of HslV is capped on each side by a ring-shaped HslU homohexamer. The assembly of the HslU/HslV complex is dependent on binding of ATP.

It is found in the cytoplasm. Its function is as follows. ATPase subunit of a proteasome-like degradation complex; this subunit has chaperone activity. The binding of ATP and its subsequent hydrolysis by HslU are essential for unfolding of protein substrates subsequently hydrolyzed by HslV. HslU recognizes the N-terminal part of its protein substrates and unfolds these before they are guided to HslV for hydrolysis. The polypeptide is ATP-dependent protease ATPase subunit HslU (Aliivibrio fischeri (strain ATCC 700601 / ES114) (Vibrio fischeri)).